The chain runs to 142 residues: Transcription antitermination protein NusB (142 aa).

This sequence belongs to the NusB family.

Involved in transcription antitermination. Required for transcription of ribosomal RNA (rRNA) genes. Binds specifically to the boxA antiterminator sequence of the ribosomal RNA (rrn) operons. This is Transcription antitermination protein NusB from Borrelia garinii subsp. bavariensis (strain ATCC BAA-2496 / DSM 23469 / PBi) (Borreliella bavariensis).